Reading from the N-terminus, the 504-residue chain is Maturase K (504 aa).

The protein belongs to the intron maturase 2 family. MatK subfamily.

The protein resides in the plastid. Its subcellular location is the chloroplast. Functionally, usually encoded in the trnK tRNA gene intron. Probably assists in splicing its own and other chloroplast group II introns. The chain is Maturase K from Hamamelis virginiana (Witch-hazel).